The sequence spans 545 residues: Chaperonin GroEL 3 (545 aa).

ATP-binding positions include 30 to 33 (TLGP), Lys51, 87 to 91 (DGTTT), Gly415, and Asp496.

Belongs to the chaperonin (HSP60) family. Forms a cylinder of 14 subunits composed of two heptameric rings stacked back-to-back. Interacts with the co-chaperonin GroES.

It localises to the cytoplasm. It carries out the reaction ATP + H2O + a folded polypeptide = ADP + phosphate + an unfolded polypeptide.. In terms of biological role, together with its co-chaperonin GroES, plays an essential role in assisting protein folding. The GroEL-GroES system forms a nano-cage that allows encapsulation of the non-native substrate proteins and provides a physical environment optimized to promote and accelerate protein folding. This Nitrobacter hamburgensis (strain DSM 10229 / NCIMB 13809 / X14) protein is Chaperonin GroEL 3.